Consider the following 398-residue polypeptide: SEC12-like protein 1 (398 aa).

Met1 is subject to N-acetylmethionine. Residues 1–337 (MEIEEASRES…TVPKEWKEWQ (337 aa)) lie on the Cytoplasmic side of the membrane. WD repeat units follow at residues 71–110 (DSDGDPVAVSVHPGGDYFVCSTSKGGCKLFELVGGATGIT), 120–159 (QNAGLQKCMAFSFDGSKLAVGGVDGCLRIMEWPNLSVILD), 162–201 (KAHKSIRDMDFSLDSEFLATTSTDGSARIWKAEDGFPLST), 252–291 (LSRKTASTMAVSLDGKYIALGGKDGDVSVAEVKTMEIYHY), and 296–334 (HLGQSIASLEFCPSERVMLTTSSEWGEMVTKLTVPKEWK). A helical transmembrane segment spans residues 338-358 (IYALLFCLFMASVIAAYVFFE). The Lumenal segment spans residues 359 to 398 (NSDSFWKLPMGKDQKRPKISLFGGSSSTPSEDHSRWNLDL).

Ubiquitous with higher levels in flowers, roots and senescing leaves.

Its subcellular location is the endoplasmic reticulum membrane. Its function is as follows. Involved in Pi uptake by facilitating the trafficking of PHT1-1/PHT1;1 from the endoplasmic reticulum to the plasma membrane. This is SEC12-like protein 1 (PHF1) from Arabidopsis thaliana (Mouse-ear cress).